A 337-amino-acid chain; its full sequence is Cytoskeleton protein RodZ (337 aa).

The Cytoplasmic segment spans residues 1-111 (MNTEATHDQN…LGKRRKKRDG (111 aa)). The region spanning 19–71 (LRNAREQLGLSQQAVAERLCLKVSTVRDIEEDKAPADLASTFLRGYIRSYARL) is the HTH cro/C1-type domain. A DNA-binding region (H-T-H motif) is located at residues 30 to 49 (QQAVAERLCLKVSTVRDIEE). The helical; Signal-anchor for type II membrane protein transmembrane segment at 112–132 (WLMTFTWLVLFVVIGLSGAWW) threads the bilayer. The Periplasmic portion of the chain corresponds to 133 to 337 (WQDHKAQQEE…TLNAEQSPAQ (205 aa)). The span at 145–167 (TMADQSSAELSSNSEQGQSVPLN) shows a compositional bias: polar residues. Residues 145–220 (TMADQSSAEL…VSPSQANVDT (76 aa)) form a disordered region. The span at 168 to 207 (TSTTTDPATTSTPPASVDTTATNTQTPAVTAPAPAVDPQQ) shows a compositional bias: low complexity. The segment covering 208-218 (NAVVSPSQANV) has biased composition (polar residues).

The protein belongs to the RodZ family.

Its subcellular location is the cell inner membrane. Its function is as follows. Cytoskeletal protein that is involved in cell-shape control through regulation of the length of the long axis. This is Cytoskeleton protein RodZ from Escherichia coli O17:K52:H18 (strain UMN026 / ExPEC).